Consider the following 283-residue polypeptide: Polyamine aminopropyltransferase (283 aa).

Residues 5–241 (NNWYIEHFER…GWWSVTLARK (237 aa)) enclose the PABS domain. Gln35 contributes to the S-methyl-5'-thioadenosine binding site. Spermidine contacts are provided by His66 and Asp90. S-methyl-5'-thioadenosine contacts are provided by residues Asp110 and 141 to 142 (DG). Asp160 (proton acceptor) is an active-site residue. 160–163 (DSTD) provides a ligand contact to spermidine. Position 167 (Pro167) interacts with S-methyl-5'-thioadenosine.

It belongs to the spermidine/spermine synthase family. In terms of assembly, homodimer or homotetramer.

It localises to the cytoplasm. It catalyses the reaction S-adenosyl 3-(methylsulfanyl)propylamine + putrescine = S-methyl-5'-thioadenosine + spermidine + H(+). The protein operates within amine and polyamine biosynthesis; spermidine biosynthesis; spermidine from putrescine: step 1/1. Catalyzes the irreversible transfer of a propylamine group from the amino donor S-adenosylmethioninamine (decarboxy-AdoMet) to putrescine (1,4-diaminobutane) to yield spermidine. The sequence is that of Polyamine aminopropyltransferase from Stenotrophomonas maltophilia (strain R551-3).